The primary structure comprises 614 residues: 1-deoxy-D-xylulose-5-phosphate synthase (614 aa).

Thiamine diphosphate is bound by residues His-74 and Gly-115–Ser-117. Asp-146 contributes to the Mg(2+) binding site. Thiamine diphosphate-binding positions include Gly-147–Ala-148, Asn-175, Tyr-282, and Glu-363. A Mg(2+)-binding site is contributed by Asn-175.

This sequence belongs to the transketolase family. DXPS subfamily. In terms of assembly, homodimer. Requires Mg(2+) as cofactor. Thiamine diphosphate is required as a cofactor.

It carries out the reaction D-glyceraldehyde 3-phosphate + pyruvate + H(+) = 1-deoxy-D-xylulose 5-phosphate + CO2. Its pathway is metabolic intermediate biosynthesis; 1-deoxy-D-xylulose 5-phosphate biosynthesis; 1-deoxy-D-xylulose 5-phosphate from D-glyceraldehyde 3-phosphate and pyruvate: step 1/1. In terms of biological role, catalyzes the acyloin condensation reaction between C atoms 2 and 3 of pyruvate and glyceraldehyde 3-phosphate to yield 1-deoxy-D-xylulose-5-phosphate (DXP). The sequence is that of 1-deoxy-D-xylulose-5-phosphate synthase from Methylobacillus flagellatus (strain ATCC 51484 / DSM 6875 / VKM B-1610 / KT).